The chain runs to 90 residues: Lantipeptide prochlorosin 1.7 (90 aa).

The propeptide occupies 1–68 (MSEEQLKAFI…DAELEGVAGG (68 aa)). 2 positions are modified to 2,3-didehydrobutyrine: T69 and T73. A cross-link (lanthionine (Ser-Cys)) is located at residues 76–79 (SITC). 2 consecutive cross-links (beta-methyllanthionine (Thr-Cys)) follow at residues 78–82 (TCETC) and 81–90 (TCDLLVGKMC).

Post-translationally, cross-links are proved in vitro, when coepressed in E.coli with the ProcM lanthionine synthetase. In terms of processing, the lanthionine residue has a DL configuration (with 2S,6R stereochemistry), whereas the beta-methyllanthionine residues have a DL configuration (with 2S,3S,6R stereochemistry). Maturation of prochlorosin involves the enzymatic conversion of Thr, and Ser into dehydrated AA and the formation of thioether bonds with cysteines. This is followed by membrane translocation and cleavage of the modified precursor.

It is found in the secreted. Lanthionine-containing peptide (lantipeptide) with unknown function. Does not show antibiotic activity against Lactococcus lactis 117 and Bacillus subtilis 6633 bacteria. Organisms that produce this peptide live in oligotrophic environments at very dilute concentrations, suggesting this peptide is not secreted to influence other bacteria. The protein is Lantipeptide prochlorosin 1.7 of Prochlorococcus marinus (strain MIT 9313).